We begin with the raw amino-acid sequence, 578 residues long: DNA primase (578 aa).

The CHC2-type zinc-finger motif lies at cysteine 40–cysteine 64. Residues lysine 257–proline 339 form the Toprim domain. Residues glutamate 263, aspartate 307, and aspartate 309 each contribute to the Mg(2+) site.

Belongs to the DnaG primase family. In terms of assembly, monomer. Interacts with DnaB. Zn(2+) is required as a cofactor. Mg(2+) serves as cofactor.

It catalyses the reaction ssDNA + n NTP = ssDNA/pppN(pN)n-1 hybrid + (n-1) diphosphate.. Its function is as follows. RNA polymerase that catalyzes the synthesis of short RNA molecules used as primers for DNA polymerase during DNA replication. This Buchnera aphidicola subsp. Baizongia pistaciae (strain Bp) protein is DNA primase.